A 575-amino-acid chain; its full sequence is Proline--tRNA ligase (575 aa).

This sequence belongs to the class-II aminoacyl-tRNA synthetase family. ProS type 1 subfamily. Homodimer.

It localises to the cytoplasm. The catalysed reaction is tRNA(Pro) + L-proline + ATP = L-prolyl-tRNA(Pro) + AMP + diphosphate. In terms of biological role, catalyzes the attachment of proline to tRNA(Pro) in a two-step reaction: proline is first activated by ATP to form Pro-AMP and then transferred to the acceptor end of tRNA(Pro). As ProRS can inadvertently accommodate and process non-cognate amino acids such as alanine and cysteine, to avoid such errors it has two additional distinct editing activities against alanine. One activity is designated as 'pretransfer' editing and involves the tRNA(Pro)-independent hydrolysis of activated Ala-AMP. The other activity is designated 'posttransfer' editing and involves deacylation of mischarged Ala-tRNA(Pro). The misacylated Cys-tRNA(Pro) is not edited by ProRS. The chain is Proline--tRNA ligase from Pseudothermotoga lettingae (strain ATCC BAA-301 / DSM 14385 / NBRC 107922 / TMO) (Thermotoga lettingae).